The sequence spans 526 residues: Cytochrome P450 monooxygenase 226 (526 aa).

A helical transmembrane segment spans residues 15–35 (FATSYAALTVAAVTLLAALLV). N-linked (GlcNAc...) asparagine glycosylation is found at N219, N277, and N320. Residue C452 participates in heme binding.

It belongs to the cytochrome P450 family. Heme is required as a cofactor.

The protein localises to the membrane. Its pathway is secondary metabolite biosynthesis. Functionally, cytochrome P450 monooxygenase that is able to use anthracene, carbazole and phenanthrene as substrates for oxidation. These multifunctional properties against a series of polycyclic aromatic hydrocarbons (PAHs) suggest that CYP226 would play important roles, at least in part, in fungal metabolic systems involved in xenobiotic detoxification. The polypeptide is Cytochrome P450 monooxygenase 226 (Postia placenta (strain ATCC 44394 / Madison 698-R) (Brown rot fungus)).